The sequence spans 156 residues: Cyanate hydratase (156 aa).

Residues R96, E99, and S122 contribute to the active site.

This sequence belongs to the cyanase family. In terms of assembly, homodecamer composed of five homodimers.

It catalyses the reaction cyanate + hydrogencarbonate + 3 H(+) = NH4(+) + 2 CO2. Its function is as follows. Catalyzes the reaction of cyanate with bicarbonate to produce ammonia and carbon dioxide. This Escherichia coli O157:H7 protein is Cyanate hydratase (cynS).